The chain runs to 514 residues: Polygalacturonase (514 aa).

A signal peptide spans 1–22 (MAMKFIAPMAFVAMQLIIMAAA). A propeptide spanning residues 23-45 (EDQSAQIMLDSDIEQYLRSNRSL) is cleaved from the precursor. 5 PbH1 repeats span residues 214 to 240 (CEGVKIIGISITAPRDSPNTDGIDIFA), 241 to 262 (SKNFHLQKNTIGTGDDCVAIGT), 264 to 284 (SSNIVIEDLICGPGHGISIGS), 294 to 315 (VSYVHVNGAKFIDTQNGLRIKT), and 323 to 344 (ASHIIYENVEMINSENPILINQ). Aspartate 255 (proton donor) is an active-site residue. The active site involves histidine 278. Residues 434–514 (AKRKESKSHK…CSRHGKIYHP (81 aa)) constitute a propeptide that is removed on maturation. N-linked (GlcNAc...) asparagine glycans are attached at residues asparagine 460 and asparagine 472.

The protein belongs to the glycosyl hydrolase 28 family.

It is found in the secreted. The protein resides in the plastid. The protein localises to the amyloplast. Its subcellular location is the cell wall. It catalyses the reaction (1,4-alpha-D-galacturonosyl)n+m + H2O = (1,4-alpha-D-galacturonosyl)n + (1,4-alpha-D-galacturonosyl)m.. In Cryptomeria japonica (Japanese cedar), this protein is Polygalacturonase.